The sequence spans 89 residues: Small ribosomal subunit protein uS15 (89 aa).

It belongs to the universal ribosomal protein uS15 family. Part of the 30S ribosomal subunit. Forms a bridge to the 50S subunit in the 70S ribosome, contacting the 23S rRNA.

One of the primary rRNA binding proteins, it binds directly to 16S rRNA where it helps nucleate assembly of the platform of the 30S subunit by binding and bridging several RNA helices of the 16S rRNA. Its function is as follows. Forms an intersubunit bridge (bridge B4) with the 23S rRNA of the 50S subunit in the ribosome. This Bacillus anthracis (strain CDC 684 / NRRL 3495) protein is Small ribosomal subunit protein uS15.